A 365-amino-acid polypeptide reads, in one-letter code: Protein RecA (365 aa).

81-88 contacts ATP; it reads GPESSGKT.

The protein belongs to the RecA family.

The protein resides in the cytoplasm. In terms of biological role, can catalyze the hydrolysis of ATP in the presence of single-stranded DNA, the ATP-dependent uptake of single-stranded DNA by duplex DNA, and the ATP-dependent hybridization of homologous single-stranded DNAs. It interacts with LexA causing its activation and leading to its autocatalytic cleavage. This chain is Protein RecA, found in Borreliella burgdorferi (strain ATCC 35210 / DSM 4680 / CIP 102532 / B31) (Borrelia burgdorferi).